The following is a 458-amino-acid chain: tRNA modification GTPase MnmE (458 aa).

Positions 23, 80, and 122 each coordinate (6S)-5-formyl-5,6,7,8-tetrahydrofolate. The region spanning 218–380 (GMKIVIAGRP…LREHLQQTMG (163 aa)) is the TrmE-type G domain. Asn228 is a binding site for K(+). Residues 228-233 (NVGKSS), 247-253 (TQIPGTT), 272-275 (DTAG), and 361-363 (SAR) each bind GTP. Residue Ser232 coordinates Mg(2+). Positions 247, 249, and 252 each coordinate K(+). Thr253 provides a ligand contact to Mg(2+). Lys458 contributes to the (6S)-5-formyl-5,6,7,8-tetrahydrofolate binding site.

This sequence belongs to the TRAFAC class TrmE-Era-EngA-EngB-Septin-like GTPase superfamily. TrmE GTPase family. In terms of assembly, homodimer. Heterotetramer of two MnmE and two MnmG subunits. K(+) serves as cofactor.

It localises to the cytoplasm. Its function is as follows. Exhibits a very high intrinsic GTPase hydrolysis rate. Involved in the addition of a carboxymethylaminomethyl (cmnm) group at the wobble position (U34) of certain tRNAs, forming tRNA-cmnm(5)s(2)U34. This is tRNA modification GTPase MnmE from Hamiltonella defensa subsp. Acyrthosiphon pisum (strain 5AT).